The sequence spans 232 residues: Phosphatidylserine decarboxylase proenzyme (232 aa).

Serine 190 serves as the catalytic Schiff-base intermediate with substrate; via pyruvic acid. Serine 190 bears the Pyruvic acid (Ser); by autocatalysis mark.

Belongs to the phosphatidylserine decarboxylase family. PSD-A subfamily. Heterodimer of a large membrane-associated beta subunit and a small pyruvoyl-containing alpha subunit. The cofactor is pyruvate. Post-translationally, is synthesized initially as an inactive proenzyme. Formation of the active enzyme involves a self-maturation process in which the active site pyruvoyl group is generated from an internal serine residue via an autocatalytic post-translational modification. Two non-identical subunits are generated from the proenzyme in this reaction, and the pyruvate is formed at the N-terminus of the alpha chain, which is derived from the carboxyl end of the proenzyme. The post-translation cleavage follows an unusual pathway, termed non-hydrolytic serinolysis, in which the side chain hydroxyl group of the serine supplies its oxygen atom to form the C-terminus of the beta chain, while the remainder of the serine residue undergoes an oxidative deamination to produce ammonia and the pyruvoyl prosthetic group on the alpha chain.

Its subcellular location is the cell membrane. It catalyses the reaction a 1,2-diacyl-sn-glycero-3-phospho-L-serine + H(+) = a 1,2-diacyl-sn-glycero-3-phosphoethanolamine + CO2. It participates in phospholipid metabolism; phosphatidylethanolamine biosynthesis; phosphatidylethanolamine from CDP-diacylglycerol: step 2/2. Its function is as follows. Catalyzes the formation of phosphatidylethanolamine (PtdEtn) from phosphatidylserine (PtdSer). The sequence is that of Phosphatidylserine decarboxylase proenzyme from Rhodopseudomonas palustris (strain BisB5).